A 359-amino-acid polypeptide reads, in one-letter code: Sulfate/thiosulfate import ATP-binding protein CysA (359 aa).

One can recognise an ABC transporter domain in the interval 3–237; the sequence is VRVAGVRKEF…PNSPFVYGFI (235 aa). 35–42 is a binding site for ATP; it reads GPSGSGKT.

The protein belongs to the ABC transporter superfamily. Sulfate/tungstate importer (TC 3.A.1.6) family. As to quaternary structure, the complex is composed of two ATP-binding proteins (CysA), two transmembrane proteins (CysT and CysW) and a solute-binding protein (CysP).

It is found in the cell inner membrane. The enzyme catalyses sulfate(out) + ATP + H2O = sulfate(in) + ADP + phosphate + H(+). It carries out the reaction thiosulfate(out) + ATP + H2O = thiosulfate(in) + ADP + phosphate + H(+). Part of the ABC transporter complex CysAWTP involved in sulfate/thiosulfate import. Responsible for energy coupling to the transport system. This Brucella melitensis biotype 1 (strain ATCC 23456 / CCUG 17765 / NCTC 10094 / 16M) protein is Sulfate/thiosulfate import ATP-binding protein CysA.